The following is a 550-amino-acid chain: Methionine--tRNA ligase (550 aa).

The 'HIGH' region motif lies at Pro14–His24. Positions 145, 148, 158, and 161 each coordinate Zn(2+). The short motif at Lys331–Ser335 is the 'KMSKS' region element. Lys334 serves as a coordination point for ATP.

This sequence belongs to the class-I aminoacyl-tRNA synthetase family. MetG type 1 subfamily. As to quaternary structure, monomer. The cofactor is Zn(2+).

Its subcellular location is the cytoplasm. The enzyme catalyses tRNA(Met) + L-methionine + ATP = L-methionyl-tRNA(Met) + AMP + diphosphate. Is required not only for elongation of protein synthesis but also for the initiation of all mRNA translation through initiator tRNA(fMet) aminoacylation. The protein is Methionine--tRNA ligase of Wigglesworthia glossinidia brevipalpis.